Here is a 377-residue protein sequence, read N- to C-terminus: MSRGIIIIGSGFAARQLVKNIRKQDAHVPLTLIAADSMDEYNKPDLSHVISQSQRADDLTRQLAGEFAEQFNLRLFPHTWVADIDADAHVVKSQDKQWQYDKLVLATGATAFVPPITGRELMLTLNSQQEYRACETQLRDAQRVLIIGGGLIGSELAMDFCRAGKTVTLMDNAASLLASLMPPEVSSRLQHHLTDMGVHLLLKSQLQKLEKTEAGIRATLVSQHSIEVDAVIAATGLRPETALARRAGVAVNRGVCVDSYLQTSHPDIYAIGDCAEINGQVLPFLQPIQLSAMYLAKNLLGGNAPLKLPAMLVKVKTPELPLHLAGETQRRDLSWHITAESDGMIAKGMSGEGQLRAFVVSEDRMKEAFALLKTLSV.

This sequence belongs to the FAD-dependent oxidoreductase family. FAD serves as cofactor.

The protein localises to the cytoplasm. The catalysed reaction is 2 reduced [nitric oxide reductase rubredoxin domain] + NAD(+) + H(+) = 2 oxidized [nitric oxide reductase rubredoxin domain] + NADH. It functions in the pathway nitrogen metabolism; nitric oxide reduction. Functionally, one of at least two accessory proteins for anaerobic nitric oxide (NO) reductase. Reduces the rubredoxin moiety of NO reductase. The protein is Nitric oxide reductase FlRd-NAD(+) reductase of Salmonella paratyphi B (strain ATCC BAA-1250 / SPB7).